Reading from the N-terminus, the 492-residue chain is NADH-quinone oxidoreductase subunit N (492 aa).

14 helical membrane-spanning segments follow: residues 18-38 (ILPMLVLVCGGIFTLLINAFT), 45-65 (LNMFLCMLFLVLDFLVVLGLE), 80-100 (LSLVSQSIVLISAFLLIFLAL), 108-128 (FQTAEFYPLYLFIIAGFQFMV), 133-153 (LLLMLIGLETASLPICVLMAL), 167-187 (FTMGAMASAFFAMGAMAFYLL), 209-229 (MLFAMGVIFLIGAIGFKVSLV), 250-270 (ISIVPKIAGFVVATRLFGAFI), 277-297 (VEDIFYALILITITIPNLIAL), 305-325 (MLAYSSISHSGFALACVFIHT), 333-353 (FVYWFMFAFTYIGAFGLLWLL), 381-401 (VAILGAIFVFGLAGIPPFSVF), 415-435 (NHILLAAVMLANSAVAVFYYF), and 464-484 (MPIYAVIIAMALVCLFSVFMM).

This sequence belongs to the complex I subunit 2 family. As to quaternary structure, NDH-1 is composed of 14 different subunits. Subunits NuoA, H, J, K, L, M, N constitute the membrane sector of the complex.

It localises to the cell inner membrane. It carries out the reaction a quinone + NADH + 5 H(+)(in) = a quinol + NAD(+) + 4 H(+)(out). NDH-1 shuttles electrons from NADH, via FMN and iron-sulfur (Fe-S) centers, to quinones in the respiratory chain. The immediate electron acceptor for the enzyme in this species is believed to be ubiquinone. Couples the redox reaction to proton translocation (for every two electrons transferred, four hydrogen ions are translocated across the cytoplasmic membrane), and thus conserves the redox energy in a proton gradient. This chain is NADH-quinone oxidoreductase subunit N, found in Helicobacter acinonychis (strain Sheeba).